The primary structure comprises 781 residues: Serine/threonine-protein kinase PLK4 (781 aa).

A Protein kinase domain is found at 14–268 (YEVQHLLGKG…LEQVLRHPFM (255 aa)). ATP-binding positions include 20–28 (LGKGGFACV) and lysine 43. The active-site Proton acceptor is aspartate 139. The Cryptic POLO box 1 (CPB1) domain maps to 397–514 (TEHISVPPLN…ARFVGLVKSK (118 aa)). The segment at 463–486 (QPDPGRGLPIQEQTSETHSSGTDN) is disordered. A compositionally biased stretch (polar residues) spans 473–486 (QEQTSETHSSGTDN). Positions 515–618 (TPKVTYFSAL…GRRPVVEVLP (104 aa)) constitute a Cryptic POLO box 2 (CPB2) domain. A POLO box domain is found at 672-751 (PIKRLNVPGV…LPQVQMKLRC (80 aa)).

The protein belongs to the protein kinase superfamily. Ser/Thr protein kinase family. CDC5/Polo subfamily. In terms of assembly, homodimer. Ubiquitinated by the SCF(Slimb) ubiquitin ligase complex; leading to its degradation by the proteasome during interphase and regulating centriole number and ensuring the block to centriole reduplication.

The protein localises to the cytoplasm. Its subcellular location is the cytoskeleton. It is found in the microtubule organizing center. It localises to the centrosome. The protein resides in the centriole. The enzyme catalyses L-seryl-[protein] + ATP = O-phospho-L-seryl-[protein] + ADP + H(+). The catalysed reaction is L-threonyl-[protein] + ATP = O-phospho-L-threonyl-[protein] + ADP + H(+). Serine/threonine-protein kinase that plays a central role in centriole duplication. Able to trigger procentriole formation on the surface of the mother centriole cylinder, using mother centriole as a platform, leading to the recruitment of centriole biogenesis proteins such as sas-6. When overexpressed, it is able to induce centrosome amplification through the simultaneous generation of multiple procentrioles adjoining each parental centriole during S phase. Centrosome amplification following overexpression can initiate tumorigenesis, highlighting the importance of centrosome regulation in cancers. The polypeptide is Serine/threonine-protein kinase PLK4 (SAK) (Drosophila virilis (Fruit fly)).